Consider the following 683-residue polypeptide: Phosphomethylpyrimidine synthase (683 aa).

Substrate contacts are provided by residues Asn-235, Met-264, Tyr-293, His-329, 349–351, 390–393, and Glu-429; these read SRG and DGMR. His-433 serves as a coordination point for Zn(2+). Tyr-456 contributes to the substrate binding site. His-497 provides a ligand contact to Zn(2+). Residues Cys-577, Cys-580, and Cys-585 each coordinate [4Fe-4S] cluster. The disordered stretch occupies residues 647–683; the sequence is RQSPGVESTSLESTSLESTVLESTSLESTALEKAKEV. Positions 653 to 675 are enriched in low complexity; that stretch reads ESTSLESTSLESTVLESTSLEST.

It belongs to the ThiC family. As to quaternary structure, homodimer. [4Fe-4S] cluster is required as a cofactor.

It catalyses the reaction 5-amino-1-(5-phospho-beta-D-ribosyl)imidazole + S-adenosyl-L-methionine = 4-amino-2-methyl-5-(phosphooxymethyl)pyrimidine + CO + 5'-deoxyadenosine + formate + L-methionine + 3 H(+). It functions in the pathway cofactor biosynthesis; thiamine diphosphate biosynthesis. Functionally, catalyzes the synthesis of the hydroxymethylpyrimidine phosphate (HMP-P) moiety of thiamine from aminoimidazole ribotide (AIR) in a radical S-adenosyl-L-methionine (SAM)-dependent reaction. This chain is Phosphomethylpyrimidine synthase, found in Shewanella loihica (strain ATCC BAA-1088 / PV-4).